We begin with the raw amino-acid sequence, 100 residues long: MHSIVALMLIGTILPIAALHQKHQGFILSSSDSTGNQPMDAISRADRHTNYRSCALRLIPHVWSVCGDACQPQNGIDVAQKCCSTDCSSDYIKEICCPFD.

An N-terminal signal peptide occupies residues Met-1–Ala-18. Cystine bridges form between Cys-54–Cys-83, Cys-66–Cys-96, Cys-70–Cys-97, and Cys-82–Cys-87.

Belongs to the insulin family.

Its subcellular location is the secreted. The protein is Putative insulin-like peptide beta-type 6 (ins-5) of Caenorhabditis elegans.